Here is a 443-residue protein sequence, read N- to C-terminus: Probable D-serine dehydratase (443 aa).

Position 116 is an N6-(pyridoxal phosphate)lysine (K116).

It belongs to the serine/threonine dehydratase family. DsdA subfamily. It depends on pyridoxal 5'-phosphate as a cofactor.

It catalyses the reaction D-serine = pyruvate + NH4(+). This is Probable D-serine dehydratase from Bacillus cereus (strain ATCC 14579 / DSM 31 / CCUG 7414 / JCM 2152 / NBRC 15305 / NCIMB 9373 / NCTC 2599 / NRRL B-3711).